The sequence spans 141 residues: 3-hydroxyacyl-[acyl-carrier-protein] dehydratase FabZ (141 aa).

The active site involves His-49.

It belongs to the thioester dehydratase family. FabZ subfamily.

Its subcellular location is the cytoplasm. The enzyme catalyses a (3R)-hydroxyacyl-[ACP] = a (2E)-enoyl-[ACP] + H2O. Involved in unsaturated fatty acids biosynthesis. Catalyzes the dehydration of short chain beta-hydroxyacyl-ACPs and long chain saturated and unsaturated beta-hydroxyacyl-ACPs. This chain is 3-hydroxyacyl-[acyl-carrier-protein] dehydratase FabZ, found in Fusobacterium nucleatum subsp. nucleatum (strain ATCC 25586 / DSM 15643 / BCRC 10681 / CIP 101130 / JCM 8532 / KCTC 2640 / LMG 13131 / VPI 4355).